The following is a 56-amino-acid chain: Preprotein translocase subunit SecG (56 aa).

At 1-29 the chain is on the cytoplasmic side; that stretch reads MAKEKATLPPTGAGLMRFFDEDTRAVKVS. A helical membrane pass occupies residues 30–49; the sequence is PKGVIALTLLLIAFEFILHM. Residues 50–56 lie on the Extracellular side of the membrane; sequence FGSSIFG.

This sequence belongs to the SEC61-beta family. In terms of assembly, component of the protein translocase complex. Heterotrimer consisting of alpha (SecY), beta (SecG) and gamma (SecE) subunits. Can form oligomers of the heterotrimer.

The protein localises to the cell membrane. Functionally, involved in protein export. The function of the beta subunit is unknown, but it may be involved in stabilization of the trimeric complex. The protein is Preprotein translocase subunit SecG of Thermococcus kodakarensis (strain ATCC BAA-918 / JCM 12380 / KOD1) (Pyrococcus kodakaraensis (strain KOD1)).